Reading from the N-terminus, the 396-residue chain is Putative amidohydrolase YhaA (396 aa).

Asp85 is an active-site residue. Glu143 functions as the Proton acceptor in the catalytic mechanism. Residues Glu144, Arg182, and His368 each contribute to the Zn(2+) site.

It belongs to the peptidase M20A family. Zn(2+) is required as a cofactor. The cofactor is Co(2+).

The sequence is that of Putative amidohydrolase YhaA (yhaA) from Bacillus subtilis (strain 168).